The following is a 466-amino-acid chain: Putative multidrug resistance protein MdtD (466 aa).

A run of 14 helical transmembrane segments spans residues 11-31 (LWIV…VNTA), 48-68 (SVIV…GWLA), 71-91 (IGVK…SLLC), 105-125 (VIQG…VMKI), 137-157 (FVTL…GFLV), 164-184 (WIFL…WFLM), 194-214 (FDIS…LALD), 218-238 (SLGI…IALL), 262-282 (FSIG…LPFM), 286-306 (FLQL…VPMV), 328-347 (VLIV…ALVA), 351-370 (WIWM…AIRF), 403-423 (LGVS…MAAG), and 429-449 (MVFI…ALIF).

It belongs to the major facilitator superfamily. TCR/Tet family.

Its subcellular location is the cell inner membrane. This chain is Putative multidrug resistance protein MdtD, found in Pectobacterium carotovorum subsp. carotovorum (strain PC1).